A 938-amino-acid polypeptide reads, in one-letter code: Inner tegument protein (938 aa).

The interval 457 to 938 (EIVDLLFSST…LVEPLLLKLG (482 aa)) is interaction with large tegument protein.

This sequence belongs to the herpesviridae inner tegument protein family. In terms of assembly, interacts (via C-terminus) with the large tegument protein/LTP (via N-terminus).

The protein localises to the virion tegument. It is found in the host cytoplasm. The protein resides in the host nucleus. It localises to the host Golgi apparatus. Its subcellular location is the host trans-Golgi network. Plays an essential role in cytoplasmic secondary envelopment during viral egress. Interacts with the capsid via the large tegument protein/LTP and participates in its transport to the host trans-Golgi network (TGN) where secondary envelopment occurs. Modulates tegumentation and capsid accumulation at the viral assembly complex. The sequence is that of Inner tegument protein (U30) from Human herpesvirus 7 (strain JI) (HHV-7).